We begin with the raw amino-acid sequence, 265 residues long: uncharacterized protein (265 aa).

Glu-47 contacts thiamine diphosphate. Residues 204-247 (QHQMWLVQHILRVARHCGFTVTTMEMTLIETQVRLKITVKSDRT) are thiamine pyrophosphate binding.

It belongs to the TPP enzyme family. Mg(2+) serves as cofactor. It depends on thiamine diphosphate as a cofactor.

In terms of biological role, truncated acetolactase synthase; no longer catalytically active. This is an uncharacterized protein from Haemophilus influenzae (strain ATCC 51907 / DSM 11121 / KW20 / Rd).